The sequence spans 189 residues: Bilin-binding protein (189 aa).

Positions 1–15 (MQYLIVLALVAAASA) are cleaved as a signal peptide. 2 disulfide bridges follow: Cys23/Cys130 and Cys57/Cys185.

The protein belongs to the calycin superfamily. Lipocalin family. As to quaternary structure, homotetramer. Hemolymph.

It localises to the secreted. This protein binds the blue pigments bilins. The polypeptide is Bilin-binding protein (Pieris brassicae (White butterfly)).